Consider the following 102-residue polypeptide: Small ribosomal subunit protein uS10 (102 aa).

A disordered region spans residues 34 to 58 (LSGPVPLPTKTLEIPARKSPDGEGT).

Belongs to the universal ribosomal protein uS10 family. As to quaternary structure, part of the 30S ribosomal subunit.

Its function is as follows. Involved in the binding of tRNA to the ribosomes. The protein is Small ribosomal subunit protein uS10 of Natronomonas pharaonis (strain ATCC 35678 / DSM 2160 / CIP 103997 / JCM 8858 / NBRC 14720 / NCIMB 2260 / Gabara) (Halobacterium pharaonis).